The primary structure comprises 540 residues: MEREALPWGLEPQDVQSSDEMRSPEGYLRGNMSENEEEEISQQEGSGDYEVEEIPFGLEPQSPGFEPQSPEFEPQSPRFEPESPGFESRSPGLVPPSPEFAPRSPESDSQSPEFESQSPRYEPQSPGYEPRSPGYEPRSPGYESESSRYESQNTELKTQSPEFEAQSSKFQEGAEMLLNPEEKSPLNISVGVHPLDSFTQGFGEQPTGDLPIGPPFEMPTGALLSTPQFEMLQNPLGLTGALRGPGRRGGRARGGQGPRPNICGICGKSFGRGSTLIQHQRIHTGEKPYKCEVCSKAFSQSSDLIKHQRTHTGERPYKCPRCGKAFADSSYLLRHQRTHSGQKPYKCPHCGKAFGDSSYLLRHQRTHSHERPYSCTECGKCYSQNSSLRSHQRVHTGQRPFSCGICGKSFSQRSALIPHARSHAREKPFKCPECGKRFGQSSVLAIHARTHLPGRTYSCPDCGKTFNRSSTLIQHQRSHTGERPYRCAVCGKGFCRSSTLLQHHRVHSGERPYKCDDCGKAFSQSSDLIRHQRTHAAGRR.

Disordered regions lie at residues Met-1–Gln-166 and Thr-239–Pro-258. A phosphoserine mark is found at Ser-17, Ser-18, and Ser-23. Tyr-27 is subject to Phosphotyrosine. Ser-33 is subject to Phosphoserine. The span at Glu-34–Glu-53 shows a compositional bias: acidic residues. A phosphoserine mark is found at Ser-62, Ser-69, Ser-76, Ser-83, Ser-90, Ser-97, Ser-104, Ser-107, Ser-111, Ser-118, and Ser-125. Residues Ser-62 to Pro-77 show a composition bias toward low complexity. Residues Ser-107–Pro-119 are compositionally biased toward polar residues. Tyr-128 bears the Phosphotyrosine mark. At Ser-132 the chain carries Phosphoserine. Phosphotyrosine is present on Tyr-135. Ser-139 is modified (phosphoserine). Position 142 is a phosphotyrosine (Tyr-142). 2 positions are modified to phosphoserine: Ser-144 and Ser-147. A compositionally biased stretch (polar residues) spans Tyr-149–Gln-166. The residue at position 158 (Thr-158) is a Phosphothreonine. A Phosphoserine modification is found at Ser-160. Residues Asn-261–His-283 form a C2H2-type 1 zinc finger. Thr-284 carries the phosphothreonine modification. Residue Tyr-289 is modified to Phosphotyrosine. 4 C2H2-type zinc fingers span residues Tyr-289 to His-311, Tyr-317 to His-339, Tyr-345 to His-367, and Tyr-373 to His-395. 2 positions are modified to phosphoserine: Ser-295 and Ser-299. Thr-396 is subject to Phosphothreonine. C2H2-type zinc fingers lie at residues Phe-401–His-423, Phe-429–His-451, Tyr-457–His-479, Tyr-485–His-507, and Tyr-513–His-535. Ser-442 bears the Phosphoserine mark.

This sequence belongs to the krueppel C2H2-type zinc-finger protein family. In terms of assembly, interacts (via zinc-finger domains) with TP53 (via N-terminus); interaction might be facilitated by TP53 oligomerization state. Interacts with ELP3. May be phosphorylated at residue 'Ser-5' of the tandem heptapeptide repeats in the N-terminus. Phosphorylation might be increased upon RAS pathway activation and negatively regulate protein stability.

It localises to the nucleus. It is found in the chromosome. Functionally, binds to mammalian-wide interspersed repeat (MIRs) sequences in euchromatin and promoter regions of genes at the consensus sequence 5'-GCTGTGTG-[N20]-CCTCTCTG-3', consisting of two anchor regions connected by a linker region; the linker region probably does not contribute to the binding specificity. Required for cell homeostasis. May be involved in transcriptional regulation. This chain is Zinc finger protein 768 (ZNF768), found in Homo sapiens (Human).